We begin with the raw amino-acid sequence, 566 residues long: Serine/threonine-protein kinase haspin homolog (566 aa).

The 319-residue stretch at 248-566 (LLNTKKIGEG…HCANYLFNLN (319 aa)) folds into the Protein kinase domain. Residues 254 to 262 (IGEGAYGEV), lysine 282, 377 to 382 (KFAGSD), 418 to 423 (DLHLGN), and 456 to 458 (DYT) contribute to the ATP site. Aspartate 418 serves as the catalytic Proton acceptor.

Belongs to the protein kinase superfamily. Ser/Thr protein kinase family. Haspin subfamily. Interacts with pds5 and vtd. Requires Mg(2+) as cofactor.

The protein localises to the nucleus lamina. It is found in the chromosome. Its subcellular location is the cytoplasm. It localises to the cytoskeleton. The protein resides in the spindle. The catalysed reaction is L-seryl-[protein] + ATP = O-phospho-L-seryl-[protein] + ADP + H(+). It catalyses the reaction L-threonyl-[protein] + ATP = O-phospho-L-threonyl-[protein] + ADP + H(+). Serine/threonine-protein kinase that phosphorylates histone H3 at 'Thr-4' (H3T3ph) during mitosis and interphase. Function is essential for chromosome organization during mitosis and genome organization in interphase cells, thus playing a functional role in gene regulation. During mitosis, may act through H3T3ph to both position and modulate activation of AURKB and other components of the chromosomal passenger complex (CPC) at centromeres to ensure proper chromatid cohesion, metaphase alignment and normal progression through the cell cycle. During interphase, associates with the cohesion complex and mediates pds5 binding to chromatin to ensure correct sister chromatid cohesion, chromatin organization, and also functions with Pds5-cohesin to modify Polycomb-dependent homeotic transformations. Function during interphase is required for insulator activity, nuclear compaction, heterochromatin-induced position-effect variegation and PcG-mediated pairing-sensitive silencing. This is Serine/threonine-protein kinase haspin homolog from Drosophila melanogaster (Fruit fly).